Consider the following 235-residue polypeptide: Uridylate kinase (235 aa).

Residue 9–12 (KLSG) coordinates ATP. An involved in allosteric activation by GTP region spans residues 17–22 (GKDGYG). Gly51 lines the UMP pocket. Gly52 and Arg56 together coordinate ATP. UMP contacts are provided by residues Asp71 and 132 to 139 (TGNPYFTT). Residues Thr159, Tyr165, and Asp168 each contribute to the ATP site.

It belongs to the UMP kinase family. In terms of assembly, homohexamer.

The protein localises to the cytoplasm. The enzyme catalyses UMP + ATP = UDP + ADP. The protein operates within pyrimidine metabolism; CTP biosynthesis via de novo pathway; UDP from UMP (UMPK route): step 1/1. With respect to regulation, allosterically activated by GTP. Inhibited by UTP. Catalyzes the reversible phosphorylation of UMP to UDP. The polypeptide is Uridylate kinase (Chlorobium luteolum (strain DSM 273 / BCRC 81028 / 2530) (Pelodictyon luteolum)).